We begin with the raw amino-acid sequence, 90 residues long: Putative membrane protein insertion efficiency factor (90 aa).

Residues 68-90 (VPAHFSLRRNPQYKEEDHRGKKR) are disordered. Residues 79 to 90 (QYKEEDHRGKKR) show a composition bias toward basic and acidic residues.

It belongs to the UPF0161 family.

It localises to the cell membrane. Functionally, could be involved in insertion of integral membrane proteins into the membrane. This chain is Putative membrane protein insertion efficiency factor, found in Lactiplantibacillus plantarum (strain ATCC BAA-793 / NCIMB 8826 / WCFS1) (Lactobacillus plantarum).